The primary structure comprises 239 residues: Ribonuclease PH (239 aa).

Residues Arg-86 and 124–126 (GTR) each bind phosphate.

This sequence belongs to the RNase PH family. Homohexameric ring arranged as a trimer of dimers.

It carries out the reaction tRNA(n+1) + phosphate = tRNA(n) + a ribonucleoside 5'-diphosphate. Its function is as follows. Phosphorolytic 3'-5' exoribonuclease that plays an important role in tRNA 3'-end maturation. Removes nucleotide residues following the 3'-CCA terminus of tRNAs; can also add nucleotides to the ends of RNA molecules by using nucleoside diphosphates as substrates, but this may not be physiologically important. Probably plays a role in initiation of 16S rRNA degradation (leading to ribosome degradation) during starvation. The chain is Ribonuclease PH from Marinomonas sp. (strain MWYL1).